A 147-amino-acid chain; its full sequence is Large ribosomal subunit protein bL9 (147 aa).

The protein belongs to the bacterial ribosomal protein bL9 family.

Its function is as follows. Binds to the 23S rRNA. The polypeptide is Large ribosomal subunit protein bL9 (Clostridium acetobutylicum (strain ATCC 824 / DSM 792 / JCM 1419 / IAM 19013 / LMG 5710 / NBRC 13948 / NRRL B-527 / VKM B-1787 / 2291 / W)).